The chain runs to 62 residues: Large ribosomal subunit protein eL19 (62 aa).

It belongs to the eukaryotic ribosomal protein eL19 family.

This is Large ribosomal subunit protein eL19 (RPL19) from Zea mays (Maize).